We begin with the raw amino-acid sequence, 447 residues long: Exodeoxyribonuclease 7 large subunit (447 aa).

Belongs to the XseA family. As to quaternary structure, heterooligomer composed of large and small subunits.

The protein localises to the cytoplasm. The enzyme catalyses Exonucleolytic cleavage in either 5'- to 3'- or 3'- to 5'-direction to yield nucleoside 5'-phosphates.. Its function is as follows. Bidirectionally degrades single-stranded DNA into large acid-insoluble oligonucleotides, which are then degraded further into small acid-soluble oligonucleotides. This chain is Exodeoxyribonuclease 7 large subunit, found in Lactiplantibacillus plantarum (strain ATCC BAA-793 / NCIMB 8826 / WCFS1) (Lactobacillus plantarum).